Reading from the N-terminus, the 293-residue chain is Coatomer subunit epsilon-2 (293 aa).

This sequence belongs to the COPE family. In terms of assembly, oligomeric complex that consists of at least the alpha, beta, beta', gamma, delta, epsilon and zeta subunits.

It is found in the cytoplasm. It localises to the golgi apparatus membrane. The protein resides in the cytoplasmic vesicle. The protein localises to the COPI-coated vesicle membrane. Its function is as follows. The coatomer is a cytosolic protein complex that binds to dilysine motifs and reversibly associates with Golgi non-clathrin-coated vesicles, which further mediate biosynthetic protein transport from the ER, via the Golgi up to the trans Golgi network. The coatomer complex is required for budding from Golgi membranes, and is essential for the retrograde Golgi-to-ER transport of dilysine-tagged proteins. The protein is Coatomer subunit epsilon-2 of Arabidopsis thaliana (Mouse-ear cress).